The sequence spans 90 residues: Probable Fe(2+)-trafficking protein (90 aa).

The protein belongs to the Fe(2+)-trafficking protein family.

Could be a mediator in iron transactions between iron acquisition and iron-requiring processes, such as synthesis and/or repair of Fe-S clusters in biosynthetic enzymes. The polypeptide is Probable Fe(2+)-trafficking protein (Nitrosococcus oceani (strain ATCC 19707 / BCRC 17464 / JCM 30415 / NCIMB 11848 / C-107)).